Reading from the N-terminus, the 96-residue chain is Small ribosomal subunit protein bS6 (96 aa).

Belongs to the bacterial ribosomal protein bS6 family.

Binds together with bS18 to 16S ribosomal RNA. In Acidothermus cellulolyticus (strain ATCC 43068 / DSM 8971 / 11B), this protein is Small ribosomal subunit protein bS6.